Here is a 338-residue protein sequence, read N- to C-terminus: MEDYAENSFNVIPISMEYIRDLRTATSFRVYVIYIDLVLILALFLSIHAIRELTSKQLFSKSITHLLIASLVYGNVHNASYTIIETWSLYRSFAYSDNMTAIMFTSEECFVQHVLNSCVRFLFIAIELALNVDRIIVILFRKHFHCYPGVRGEILNILAVILSFALGCLLHLKGPHPGIVTTSCFRETDITINLCSTNLTSYTILSACCAALDFLMMWYTWNDRKKINYDLNSQYLKVEQHHSLMAVSLNSLLQLFVTSIYAISMFVLANMSMTNPELGNANLLRWFYTTPYSTLLVPIQIKVFIQWIGNRRKRRINTATRVSLTQDGYFTKLSDSWK.

7 helical membrane-spanning segments follow: residues 30 to 50 (VYVIYIDLVLILALFLSIHAI), 63 to 83 (ITHLLIASLVYGNVHNASYTI), 120 to 140 (RFLFIAIELALNVDRIIVILF), 152 to 172 (GEILNILAVILSFALGCLLHL), 199 to 219 (LTSYTILSACCAALDFLMMWY), 249 to 269 (LNSLLQLFVTSIYAISMFVLA), and 289 to 309 (TTPYSTLLVPIQIKVFIQWIG).

Belongs to the nematode receptor-like protein sra family.

It localises to the membrane. This Caenorhabditis elegans protein is Serpentine receptor class alpha-32 (sra-32).